Here is a 69-residue protein sequence, read N- to C-terminus: Ribosome modulation factor (69 aa).

The protein belongs to the ribosome modulation factor family.

The protein resides in the cytoplasm. In terms of biological role, during stationary phase, converts 70S ribosomes to an inactive dimeric form (100S ribosomes). The sequence is that of Ribosome modulation factor from Chromohalobacter salexigens (strain ATCC BAA-138 / DSM 3043 / CIP 106854 / NCIMB 13768 / 1H11).